A 92-amino-acid polypeptide reads, in one-letter code: Promotilin (92 aa).

The tract at residues 12–49 (RMQEKERNRGQKKSLGLQQRSEEVGSLDPTEAAEEEGK) is disordered.

It belongs to the motilin family.

It localises to the secreted. Its function is as follows. Plays an important role in the regulation of interdigestive gastrointestinal motility and indirectly causes rhythmic contraction of duodenal and colonic smooth muscle. In Equus caballus (Horse), this protein is Promotilin (MLN).